A 102-amino-acid polypeptide reads, in one-letter code: RNA-binding protein Hfq (102 aa).

The region spanning 9–68 (DPFLNALRRERVPVSIYLVNGIKLQGQIESFDQFVILLKNTVSQMVYKHAISTVVPSRPV) is the Sm domain. A disordered region spans residues 63–102 (VPSRPVSHHSNNAGGGASNNYHHGSNAQGSTAQQDSEETE). Residues 70–88 (HHSNNAGGGASNNYHHGSN) are compositionally biased toward low complexity.

The protein belongs to the Hfq family. In terms of assembly, homohexamer.

RNA chaperone that binds small regulatory RNA (sRNAs) and mRNAs to facilitate mRNA translational regulation in response to envelope stress, environmental stress and changes in metabolite concentrations. Also binds with high specificity to tRNAs. This is RNA-binding protein Hfq from Salmonella agona (strain SL483).